The following is a 139-amino-acid chain: Protein spalt-accessory (139 aa).

The signal sequence occupies residues methionine 1 to alanine 16. The segment covering glycine 60–glycine 75 has biased composition (gly residues). Positions glycine 60–histidine 139 are disordered. Positions asparagine 109–histidine 121 are enriched in basic and acidic residues. The segment covering arginine 122–histidine 139 has biased composition (basic residues).

Its subcellular location is the secreted. Its function is as follows. Likely to be involved in the establishment of the head. This Drosophila simulans (Fruit fly) protein is Protein spalt-accessory (sala).